The chain runs to 284 residues: 2-dehydro-3-deoxyphosphooctonate aldolase (284 aa).

This sequence belongs to the KdsA family.

It localises to the cytoplasm. The enzyme catalyses D-arabinose 5-phosphate + phosphoenolpyruvate + H2O = 3-deoxy-alpha-D-manno-2-octulosonate-8-phosphate + phosphate. It functions in the pathway carbohydrate biosynthesis; 3-deoxy-D-manno-octulosonate biosynthesis; 3-deoxy-D-manno-octulosonate from D-ribulose 5-phosphate: step 2/3. Its pathway is bacterial outer membrane biogenesis; lipopolysaccharide biosynthesis. This Escherichia coli O6:H1 (strain CFT073 / ATCC 700928 / UPEC) protein is 2-dehydro-3-deoxyphosphooctonate aldolase.